Here is a 218-residue protein sequence, read N- to C-terminus: Insulin-induced gene 2 protein (218 aa).

Over 1–21 the chain is Cytoplasmic; it reads MGETDNAPRGPPSFLPHKMNL. A helical membrane pass occupies residues 22-44; sequence LLRGLLLFLIGVFLALVLNLLQV. Over 45-63 the chain is Lumenal; that stretch reads QRNVTLFPPDVLSSLFSSA. Residues 64-81 form a helical membrane-spanning segment; it reads WWVPLCCGTAAAAIGLLY. Topologically, residues 82 to 96 are cytoplasmic; that stretch reads PCIDRHLGEPHKFKR. A helical membrane pass occupies residues 97–119; the sequence is EWSSVMRCVAVFVGINHASAKVD. The Lumenal portion of the chain corresponds to 120 to 122; it reads FAN. A helical membrane pass occupies residues 123–141; that stretch reads NTQLSLTLAALSIGLWWTF. Topologically, residues 142–146 are cytoplasmic; it reads DRSRS. The helical transmembrane segment at 147–168 threads the bilayer; that stretch reads GLGLGIGISFFATVVSQLLVYN. The Lumenal portion of the chain corresponds to 169-182; that stretch reads GVYEYTAPDFLYVR. The chain crosses the membrane as a helical span at residues 183 to 200; that stretch reads SWLPCIFFAGGITMGNIG. The Cytoplasmic portion of the chain corresponds to 201-218; sequence RQLEMYERLALVEKSHRD. Residues 212-218 carry the KxHxx motif; that stretch reads VEKSHRD.

Belongs to the INSIG family. Interacts with scap; interaction is direct and only takes place in the presence of sterols; it prevents interaction between scap and the coat protein complex II (COPII). Associates with the SCAP-SREBP complex; association is mediated via its interaction with scap and only takes place in the presence of sterols.

It is found in the endoplasmic reticulum membrane. Its function is as follows. Oxysterol-binding protein that mediates feedback control of cholesterol synthesis by controlling both endoplasmic reticulum to Golgi transport of scap and degradation of hmgcr. Acts as a negative regulator of cholesterol biosynthesis by mediating the retention of the SCAP-SREBP complex in the endoplasmic reticulum, thereby blocking the processing of sterol regulatory element-binding proteins (SREBPs). Binds oxysterol, including 22-hydroxycholesterol, 24-hydroxycholesterol, 25-hydroxycholesterol and 27-hydroxycholesterol, regulating interaction with scap and retention of the SCAP-SREBP complex in the endoplasmic reticulum. In presence of oxysterol, interacts with scap, retaining the SCAP-SREBP complex in the endoplasmic reticulum, thereby preventing scap from escorting SREBPs to the Golgi. Sterol deprivation reduce oxysterol-binding, disrupting the interaction between insig2 and scap, thereby promoting Golgi transport of the SCAP-SREBP complex, followed by processing and nuclear translocation of SREBPs. Also regulates cholesterol synthesis by regulating degradation of hmgcr. This chain is Insulin-induced gene 2 protein, found in Xenopus tropicalis (Western clawed frog).